A 320-amino-acid polypeptide reads, in one-letter code: Thiamine thiazole synthase (320 aa).

Residues Cys82, 103–104, Gly111, and Val176 each bind substrate; that span reads EA. The residue at position 209 (Cys209) is a 2,3-didehydroalanine (Cys). Substrate-binding positions include Asp211, His226, Met278, and 288–290; that span reads RMG.

The protein belongs to the THI4 family. As to quaternary structure, homooctamer. Requires Fe cation as cofactor. During the catalytic reaction, a sulfide is transferred from Cys-209 to a reaction intermediate, generating a dehydroalanine residue.

It is found in the cytoplasm. It localises to the nucleus. The catalysed reaction is [ADP-thiazole synthase]-L-cysteine + glycine + NAD(+) = [ADP-thiazole synthase]-dehydroalanine + ADP-5-ethyl-4-methylthiazole-2-carboxylate + nicotinamide + 3 H2O + 2 H(+). Involved in biosynthesis of the thiamine precursor thiazole. Catalyzes the conversion of NAD and glycine to adenosine diphosphate 5-(2-hydroxyethyl)-4-methylthiazole-2-carboxylic acid (ADT), an adenylated thiazole intermediate. The reaction includes an iron-dependent sulfide transfer from a conserved cysteine residue of the protein to a thiazole intermediate. The enzyme can only undergo a single turnover, which suggests it is a suicide enzyme. May have additional roles in adaptation to various stress conditions and in DNA damage tolerance. The sequence is that of Thiamine thiazole synthase (sti35) from Fusarium oxysporum f. sp. lycopersici (strain 4287 / CBS 123668 / FGSC 9935 / NRRL 34936) (Fusarium vascular wilt of tomato).